Reading from the N-terminus, the 194-residue chain is Imidazoleglycerol-phosphate dehydratase (194 aa).

This sequence belongs to the imidazoleglycerol-phosphate dehydratase family.

It is found in the cytoplasm. It catalyses the reaction D-erythro-1-(imidazol-4-yl)glycerol 3-phosphate = 3-(imidazol-4-yl)-2-oxopropyl phosphate + H2O. It functions in the pathway amino-acid biosynthesis; L-histidine biosynthesis; L-histidine from 5-phospho-alpha-D-ribose 1-diphosphate: step 6/9. This chain is Imidazoleglycerol-phosphate dehydratase, found in Streptococcus mutans serotype c (strain ATCC 700610 / UA159).